The following is a 466-amino-acid chain: Cytochrome c-552 (466 aa).

Positions 1–27 (MVRILTKKSFALSALVAASLMASGAMA) are cleaved as a signal peptide. His87 contacts heme c. Heme-binding residues include Cys115, Cys118, and Lys119. The heme c site is built by Cys153, Cys156, His157, Cys195, Cys198, and His199. Positions 201, 202, 250, and 252 each coordinate Ca(2+). Tyr202 provides a ligand contact to substrate. His253 contributes to the substrate binding site. Positions 264, 271, 274, 275, 290, 303, 306, 307, and 382 each coordinate heme c.

The protein belongs to the cytochrome c-552 family. It depends on Ca(2+) as a cofactor. The cofactor is heme c.

It is found in the periplasm. The enzyme catalyses 6 Fe(III)-[cytochrome c] + NH4(+) + 2 H2O = 6 Fe(II)-[cytochrome c] + nitrite + 8 H(+). Its pathway is nitrogen metabolism; nitrate reduction (assimilation). Functionally, catalyzes the reduction of nitrite to ammonia, consuming six electrons in the process. The polypeptide is Cytochrome c-552 (Shewanella woodyi (strain ATCC 51908 / MS32)).